We begin with the raw amino-acid sequence, 62 residues long: Photosystem II reaction center protein Z (62 aa).

2 helical membrane passes run 8–28 (AVFA…VVFA) and 41–61 (FSGT…NSLI).

Belongs to the PsbZ family. PSII is composed of 1 copy each of membrane proteins PsbA, PsbB, PsbC, PsbD, PsbE, PsbF, PsbH, PsbI, PsbJ, PsbK, PsbL, PsbM, PsbT, PsbY, PsbZ, Psb30/Ycf12, at least 3 peripheral proteins of the oxygen-evolving complex and a large number of cofactors. It forms dimeric complexes.

It localises to the plastid. The protein localises to the chloroplast thylakoid membrane. Functionally, may control the interaction of photosystem II (PSII) cores with the light-harvesting antenna, regulates electron flow through the 2 photosystem reaction centers. PSII is a light-driven water plastoquinone oxidoreductase, using light energy to abstract electrons from H(2)O, generating a proton gradient subsequently used for ATP formation. This chain is Photosystem II reaction center protein Z, found in Lotus japonicus (Lotus corniculatus var. japonicus).